A 136-amino-acid chain; its full sequence is Protein LITTLE ZIPPER 1 (136 aa).

The stretch at 97–122 forms a coiled coil; the sequence is ENQNIIRENEKLKKKALLLHQENKTL.

In terms of assembly, interacts with REV. Expressed in the adaxial epidermis of the cotyledons and in the vascular cylinder of wild-type torpedo stage embryos.

Functionally, competitive inhibitor of the HD-ZIPIII transcription factors in shoot apical meristem (SAM) development. Acts by forming non-functional heterodimers. Part of a negative feedback loop. Essential for proper functioning of stem cells in the SAM. The polypeptide is Protein LITTLE ZIPPER 1 (Arabidopsis thaliana (Mouse-ear cress)).